The sequence spans 154 residues: ATP synthase subunit b', chloroplastic (154 aa).

A helical membrane pass occupies residues 22 to 42 (GTLPLIAIQFLILMFLLNILL).

It belongs to the ATPase B chain family. F-type ATPases have 2 components, F(1) - the catalytic core - and F(0) - the membrane proton channel. F(1) has five subunits: alpha(3), beta(3), gamma(1), delta(1), epsilon(1). F(0) has four main subunits: a(1), b(1), b'(1) and c(10-14). The alpha and beta chains form an alternating ring which encloses part of the gamma chain. F(1) is attached to F(0) by a central stalk formed by the gamma and epsilon chains, while a peripheral stalk is formed by the delta, b and b' chains.

Its subcellular location is the plastid. The protein resides in the chloroplast thylakoid membrane. Its function is as follows. F(1)F(0) ATP synthase produces ATP from ADP in the presence of a proton or sodium gradient. F-type ATPases consist of two structural domains, F(1) containing the extramembraneous catalytic core and F(0) containing the membrane proton channel, linked together by a central stalk and a peripheral stalk. During catalysis, ATP synthesis in the catalytic domain of F(1) is coupled via a rotary mechanism of the central stalk subunits to proton translocation. In terms of biological role, component of the F(0) channel, it forms part of the peripheral stalk, linking F(1) to F(0). The b'-subunit is a diverged and duplicated form of b found in plants and photosynthetic bacteria. The chain is ATP synthase subunit b', chloroplastic from Vaucheria litorea (Yellow-green alga).